The primary structure comprises 665 residues: UvrABC system protein B (665 aa).

In terms of domain architecture, Helicase ATP-binding spans 25–412 (ASIEGGNRYQ…ENRIVEQVIR (388 aa)). Residue 38 to 45 (GATGTGKT) participates in ATP binding. Positions 91-114 (YYDYYQPEAYIPVTDTYIEKTAAI) match the Beta-hairpin motif. The Helicase C-terminal domain maps to 429–583 (QIDDLLGEIK…VAYNKLHGIT (155 aa)). Residues 626–661 (PNLIDKLEAQMKEASKKLEFEEAAKLRDRIKQLRDK) form the UVR domain.

This sequence belongs to the UvrB family. As to quaternary structure, forms a heterotetramer with UvrA during the search for lesions. Interacts with UvrC in an incision complex.

Its subcellular location is the cytoplasm. Functionally, the UvrABC repair system catalyzes the recognition and processing of DNA lesions. A damage recognition complex composed of 2 UvrA and 2 UvrB subunits scans DNA for abnormalities. Upon binding of the UvrA(2)B(2) complex to a putative damaged site, the DNA wraps around one UvrB monomer. DNA wrap is dependent on ATP binding by UvrB and probably causes local melting of the DNA helix, facilitating insertion of UvrB beta-hairpin between the DNA strands. Then UvrB probes one DNA strand for the presence of a lesion. If a lesion is found the UvrA subunits dissociate and the UvrB-DNA preincision complex is formed. This complex is subsequently bound by UvrC and the second UvrB is released. If no lesion is found, the DNA wraps around the other UvrB subunit that will check the other stand for damage. In Nostoc sp. (strain PCC 7120 / SAG 25.82 / UTEX 2576), this protein is UvrABC system protein B.